The chain runs to 198 residues: dITP/XTP pyrophosphatase (198 aa).

8 to 13 (TKNKGK) is a binding site for substrate. The active-site Proton acceptor is Asp-69. A Mg(2+)-binding site is contributed by Asp-69. Residues Ser-70, 152–155 (FGYD), Lys-175, and 180–181 (HR) contribute to the substrate site.

Belongs to the HAM1 NTPase family. In terms of assembly, homodimer. The cofactor is Mg(2+).

The enzyme catalyses XTP + H2O = XMP + diphosphate + H(+). It catalyses the reaction dITP + H2O = dIMP + diphosphate + H(+). It carries out the reaction ITP + H2O = IMP + diphosphate + H(+). Pyrophosphatase that catalyzes the hydrolysis of nucleoside triphosphates to their monophosphate derivatives, with a high preference for the non-canonical purine nucleotides XTP (xanthosine triphosphate), dITP (deoxyinosine triphosphate) and ITP. Seems to function as a house-cleaning enzyme that removes non-canonical purine nucleotides from the nucleotide pool, thus preventing their incorporation into DNA/RNA and avoiding chromosomal lesions. This is dITP/XTP pyrophosphatase from Shouchella clausii (strain KSM-K16) (Alkalihalobacillus clausii).